The primary structure comprises 218 residues: uncharacterized protein (218 aa).

A chloroplast-targeting transit peptide spans 1 to 28; the sequence is MLSLQCLPPFFISVPNRSTNSCSTAPLR.

The protein belongs to the SixA phosphatase family.

The protein resides in the plastid. It localises to the chloroplast. This is an uncharacterized protein from Arabidopsis thaliana (Mouse-ear cress).